A 457-amino-acid chain; its full sequence is MHISKPAGPLPASVPFYRQLYFQVVVAIILGALLGRFEPAFAESLKPLGDAFIKLVKMIIAPVIFLTIVTGIAGMTHLKTVGRVFGKAMVYFLFFSTLALVVGLVVAHVVQPGAGMNINPADLDQSAVKSYVEKSHDLTLVGFLMDIIPNSLIGAFTGDQVVNGKLTGPNILQVLFVAVLFGVSLALVGERGKPVLNLLEALIAPVFKLVHILMRAAPIGAFGAIAFTIGKYGVESLVNLAWLVGSFYLTSLLFVLVILGVVCRLCGFSVLKLIRYLKAELLLVLGTSSSESALPSLMEKMEKAGCEKSVVGLVVPTGYSFNLDGTNIYMTLAALFIAQATNTELTLGHQIALLAVAMLSSKGAAGVTGAGFITLAATLAVVPEVPVAGMALILGVDRFMSECRSLTNFIGNAVATVVVSRWENALDRDRLTLVLDGGEPPLLAPVGEPGVAPAALR.

The next 9 membrane-spanning stretches (helical) occupy residues 22-42 (FQVV…PAFA), 55-75 (LVKM…IAGM), 90-110 (VYFL…AHVV), 138-158 (LTLV…AFTG), 168-188 (GPNI…LALV), 209-229 (LVHI…AFTI), 242-262 (WLVG…LGVV), 335-357 (LFIA…LAVA), and 376-396 (AATL…ILGV).

The protein belongs to the dicarboxylate/amino acid:cation symporter (DAACS) (TC 2.A.23) family.

The protein localises to the cell inner membrane. In terms of biological role, responsible for the transport of dicarboxylates such as succinate, fumarate, and malate from the periplasm across the membrane. The protein is C4-dicarboxylate transport protein of Xanthomonas oryzae pv. oryzae (strain MAFF 311018).